The sequence spans 306 residues: MQDKEKKIKVIVLGGPTGSGKSDLAVKLAEEIGGEIVNADSMQVYRRLDIGTAKPSAADLARVPHHLIDILDPNEDFTASDFRREATAAIADIERRGKRAIVVGGTGLYIRALLYGLVDSPTGDPELRRQFDDVPGEELLRRLSLVDPETAARLHPNDRVRLIRALEVYTQTGRPVSAFRSEHAFSDVHYQVLKMAIRVERQELYRRIDLRVEKMLEDGLVEEVRLLLAAGYGHELKALRSIGYKEITAYLAGEMTLDEAVTLIKRDTRRYAKRQMTWFGKENDIYWLEYPGSFATILGHVIEFLA.

Residue 15–22 (GPTGSGKS) participates in ATP binding. 17 to 22 (TGSGKS) serves as a coordination point for substrate. The tract at residues 40-43 (DSMQ) is interaction with substrate tRNA.

It belongs to the IPP transferase family. In terms of assembly, monomer. Requires Mg(2+) as cofactor.

The catalysed reaction is adenosine(37) in tRNA + dimethylallyl diphosphate = N(6)-dimethylallyladenosine(37) in tRNA + diphosphate. Catalyzes the transfer of a dimethylallyl group onto the adenine at position 37 in tRNAs that read codons beginning with uridine, leading to the formation of N6-(dimethylallyl)adenosine (i(6)A). The sequence is that of tRNA dimethylallyltransferase 1 from Citrifermentans bemidjiense (strain ATCC BAA-1014 / DSM 16622 / JCM 12645 / Bem) (Geobacter bemidjiensis).